The primary structure comprises 358 residues: Protein PXR1 (358 aa).

Disordered stretches follow at residues 1–26 (MGLAAPKNRSKISNDPQNTTWANNTS) and 146–342 (EVKT…KSAT). Polar residues predominate over residues 11–26 (KISNDPQNTTWANNTS). The 55-residue stretch at 25–79 (TSRFGHRILTSQGWQPGDSLGASDAAHAAHYTVASQSHIRVLLKDDNLGLGAKRG) folds into the G-patch domain. Basic and acidic residues-rich tracts occupy residues 146–171 (EVKTETQAKVEVKSEPESDGAKEDDR) and 199–217 (SMDLRDQAKKDIAAESSKD). Basic residues predominate over residues 218–227 (KKGKKSKKDK). A compositionally biased stretch (acidic residues) spans 287-299 (DVEDLSSESEDES). Polar residues predominate over residues 300 to 315 (TPSASRPATGTSTPTV). Over residues 328–339 (HSVRQKWIRSKK) the composition is skewed to basic residues.

It belongs to the PINX1 family.

The protein localises to the nucleus. Its subcellular location is the nucleolus. Functionally, involved in rRNA-processing at A0, A1 and A2 sites and negatively regulates telomerase. The polypeptide is Protein PXR1 (PXR1) (Phaeosphaeria nodorum (strain SN15 / ATCC MYA-4574 / FGSC 10173) (Glume blotch fungus)).